We begin with the raw amino-acid sequence, 276 residues long: Pantothenate synthetase (276 aa).

25 to 32 (MGYLHRGH) is an ATP binding site. His-32 serves as the catalytic Proton donor. Residue Gln-56 participates in (R)-pantoate binding. Gln-56 lines the beta-alanine pocket. 143–146 (GEKD) contacts ATP. Gln-149 contacts (R)-pantoate. Residues Val-172 and 180 to 183 (LSSR) each bind ATP.

Belongs to the pantothenate synthetase family. Homodimer.

Its subcellular location is the cytoplasm. It catalyses the reaction (R)-pantoate + beta-alanine + ATP = (R)-pantothenate + AMP + diphosphate + H(+). Its pathway is cofactor biosynthesis; (R)-pantothenate biosynthesis; (R)-pantothenate from (R)-pantoate and beta-alanine: step 1/1. Its function is as follows. Catalyzes the condensation of pantoate with beta-alanine in an ATP-dependent reaction via a pantoyl-adenylate intermediate. This chain is Pantothenate synthetase, found in Thermus thermophilus (strain ATCC BAA-163 / DSM 7039 / HB27).